The primary structure comprises 120 residues: Large ribosomal subunit protein bL19 (120 aa).

Belongs to the bacterial ribosomal protein bL19 family.

This protein is located at the 30S-50S ribosomal subunit interface and may play a role in the structure and function of the aminoacyl-tRNA binding site. In Chlorobium phaeobacteroides (strain DSM 266 / SMG 266 / 2430), this protein is Large ribosomal subunit protein bL19.